We begin with the raw amino-acid sequence, 466 residues long: GATA-binding factor 2 (466 aa).

Composition is skewed to low complexity over residues 139–155 (GSSTSSTASVSSLTPAS) and 174–188 (PDPNSTSAASPSSSA). A disordered region spans residues 139–196 (GSSTSSTASVSSLTPASHSGSHLFGFPPTPPKEVSPDPNSTSAASPSSSAGARQEDKD). 2 consecutive GATA-type zinc fingers follow at residues 281–305 (CVNCGATATPLWRRDGTGHYLCNAC) and 335–359 (CANCQTTTTTLWRRNANGDPVCNAC). The tract at residues 436–466 (GHILPTPTPIHPSSSISFGHPHPSSMVTAMG) is disordered.

Expressed in all developmental stages of erythroid cells but is additionally found in a limited subset of other tissues.

Its subcellular location is the nucleus. Its function is as follows. Transcriptional activator which probably serves as a general switch factor for cell-specific development. It binds to DNA sites with the consensus sequence 5'-[AT]GATA[AG]-3' within regulatory regions of genes. This chain is GATA-binding factor 2 (GATA2), found in Gallus gallus (Chicken).